The following is a 159-amino-acid chain: uncharacterized protein (159 aa).

It belongs to the IIV-6 136R family.

This is an uncharacterized protein from Invertebrate iridescent virus 3 (IIV-3).